We begin with the raw amino-acid sequence, 449 residues long: Probable glycosyltransferase 5 (449 aa).

Over residues 1-14 the composition is skewed to basic and acidic residues; that stretch reads MMEKHGGKVTSDRR. Residues 1 to 24 are disordered; it reads MMEKHGGKVTSDRRAGRRQHGQRC. The Cytoplasmic portion of the chain corresponds to 1-28; it reads MMEKHGGKVTSDRRAGRRQHGQRCSASD. The chain crosses the membrane as a helical; Signal-anchor for type II membrane protein span at residues 29-49; the sequence is AAPLVVVVILIVAALFLILGP. Over 50-449 the chain is Lumenal; it reads TGSSSFTVPR…HPTFRAARPT (400 aa). The tract at residues 74–109 is disordered; sequence APPPPPPPAQMQAGANASSEEDSGLPPPRQLTDPPY. Residues Asn-89, Asn-413, and Asn-422 are each glycosylated (N-linked (GlcNAc...) asparagine).

This sequence belongs to the glycosyltransferase 34 family.

It localises to the golgi apparatus membrane. Its function is as follows. Probable glycosyltransferase that may be involved in the biosynthesis of xyloglucan. The protein is Probable glycosyltransferase 5 of Oryza sativa subsp. japonica (Rice).